Reading from the N-terminus, the 142-residue chain is Galactose-6-phosphate isomerase subunit LacA (142 aa).

It belongs to the LacAB/RpiB family. As to quaternary structure, heteromultimeric protein consisting of LacA and LacB.

The enzyme catalyses aldehydo-D-galactose 6-phosphate = keto-D-tagatose 6-phosphate. It participates in carbohydrate metabolism; D-galactose 6-phosphate degradation; D-tagatose 6-phosphate from D-galactose 6-phosphate: step 1/1. This Staphylococcus haemolyticus (strain JCSC1435) protein is Galactose-6-phosphate isomerase subunit LacA.